Consider the following 105-residue polypeptide: Large ribosomal subunit protein bL21 (105 aa).

It belongs to the bacterial ribosomal protein bL21 family. Part of the 50S ribosomal subunit. Contacts protein L20.

In terms of biological role, this protein binds to 23S rRNA in the presence of protein L20. The sequence is that of Large ribosomal subunit protein bL21 from Rickettsia peacockii (strain Rustic).